A 162-amino-acid chain; its full sequence is Transcription antitermination protein RfaH (162 aa).

This sequence belongs to the RfaH family. Interacts with both the nontemplate DNA and the RNA polymerase (RNAP).

In terms of biological role, enhances distal genes transcription elongation in a specialized subset of operons that encode extracytoplasmic components. RfaH is recruited into a multi-component RNA polymerase complex by the ops element, which is a short conserved DNA sequence located downstream of the main promoter of these operons. Once bound, RfaH suppresses pausing and inhibits Rho-dependent and intrinsic termination at a subset of sites. Termination signals are bypassed, which allows complete synthesis of long RNA chains. Also negatively controls expression and surface presentation of AG43 and possibly another AG43-independent factor that mediates cell-cell interactions and biofilm formation,. In Escherichia coli O6:K15:H31 (strain 536 / UPEC), this protein is Transcription antitermination protein RfaH.